Reading from the N-terminus, the 230-residue chain is Thymidylate kinase (230 aa).

20–27 contacts ATP; the sequence is GGEGAGKS.

It belongs to the thymidylate kinase family.

It carries out the reaction dTMP + ATP = dTDP + ADP. In terms of biological role, phosphorylation of dTMP to form dTDP in both de novo and salvage pathways of dTTP synthesis. In Rhodopseudomonas palustris (strain TIE-1), this protein is Thymidylate kinase.